Here is a 153-residue protein sequence, read N- to C-terminus: Ribosome maturation factor RimP (153 aa).

This sequence belongs to the RimP family.

The protein resides in the cytoplasm. Required for maturation of 30S ribosomal subunits. The sequence is that of Ribosome maturation factor RimP from Acidithiobacillus ferrooxidans (strain ATCC 53993 / BNL-5-31) (Leptospirillum ferrooxidans (ATCC 53993)).